The following is a 221-amino-acid chain: Growth hormone-releasing peptides (221 aa).

The N-terminal stretch at 1 to 25 (MHLKIGTLTIRTIMLFTLCTFLTLF) is a signal peptide. The propeptide occupies 26 to 95 (AFSTCFDETK…QPENEFLQER (70 aa)). A Phenylalanine amide modification is found at Phe-107. Positions 110–127 (TSDDKIAKSIPSFDKIAK) are excised as a propeptide. Residues Phe-136, Phe-156, and Phe-176 each carry the phenylalanine amide modification. A propeptide spanning residues 179–221 (TPHSDRLQYEMNSHPLELKNPEEDSDRKKRQAMTFRIRTDLQM) is cleaved from the precursor.

It belongs to the FARP (FMRFamide related peptide) family. Observed in the suprachiasmatic nucleus and in several telencephalic and diencephalic regions.

Its subcellular location is the secreted. Functionally, primary role is to release GH from the pituitary. May act as an endogenous ligand in the bullfrog hypothalamo-hypophysial system. This Aquarana catesbeiana (American bullfrog) protein is Growth hormone-releasing peptides.